A 477-amino-acid polypeptide reads, in one-letter code: Probable cytosolic Fe-S cluster assembly factor GM20417 (477 aa).

[4Fe-4S] cluster is bound by residues Cys23, Cys68, Cys71, Cys74, Cys187, Cys243, Cys395, and Cys399.

Belongs to the NARF family.

In terms of biological role, component of the cytosolic iron-sulfur (Fe/S) protein assembly machinery. Required for maturation of extramitochondrial Fe/S proteins. The protein is Probable cytosolic Fe-S cluster assembly factor GM20417 of Drosophila sechellia (Fruit fly).